The chain runs to 389 residues: Flagellar P-ring protein (389 aa).

Positions methionine 1–alanine 33 are cleaved as a signal peptide.

This sequence belongs to the FlgI family. As to quaternary structure, the basal body constitutes a major portion of the flagellar organelle and consists of four rings (L,P,S, and M) mounted on a central rod.

The protein resides in the periplasm. It is found in the bacterial flagellum basal body. Its function is as follows. Assembles around the rod to form the L-ring and probably protects the motor/basal body from shearing forces during rotation. The protein is Flagellar P-ring protein of Burkholderia mallei (strain ATCC 23344).